We begin with the raw amino-acid sequence, 118 residues long: MSLTFYWYPKCGTCRKAKKWLEEHGKEINEIHIAEQPPSKEELKALYEKSGLDLKKFFNTSGMKYRELNLKEKLYHMSEDEQLELLASDGMLIKRPLTTDGEKVTVGFKEDQFEENWA.

Cys11 and Cys14 are oxidised to a cystine.

This sequence belongs to the ArsC family.

This is an uncharacterized protein from Bacillus subtilis (strain 168).